Here is a 371-residue protein sequence, read N- to C-terminus: Peptide chain release factor 2 (371 aa).

An N5-methylglutamine modification is found at Q253.

It belongs to the prokaryotic/mitochondrial release factor family. Methylated by PrmC. Methylation increases the termination efficiency of RF2.

The protein localises to the cytoplasm. Its function is as follows. Peptide chain release factor 2 directs the termination of translation in response to the peptide chain termination codons UGA and UAA. The sequence is that of Peptide chain release factor 2 from Mycobacterium marinum (strain ATCC BAA-535 / M).